Reading from the N-terminus, the 338-residue chain is Methionine import ATP-binding protein MetN 1 (338 aa).

In terms of domain architecture, ABC transporter spans 2–241; the sequence is IELHQVSKSF…AKHATTKRFV (240 aa). 38-45 is a binding site for ATP; that stretch reads GYSGAGKS.

Belongs to the ABC transporter superfamily. Methionine importer (TC 3.A.1.24) family. In terms of assembly, the complex is composed of two ATP-binding proteins (MetN), two transmembrane proteins (MetI) and a solute-binding protein (MetQ).

It localises to the cell membrane. It carries out the reaction L-methionine(out) + ATP + H2O = L-methionine(in) + ADP + phosphate + H(+). The catalysed reaction is D-methionine(out) + ATP + H2O = D-methionine(in) + ADP + phosphate + H(+). Its function is as follows. Part of the ABC transporter complex MetNIQ involved in methionine import. Responsible for energy coupling to the transport system. The protein is Methionine import ATP-binding protein MetN 1 of Listeria monocytogenes serotype 4b (strain F2365).